The sequence spans 173 residues: dCTP deaminase, dUMP-forming (173 aa).

Residues R93–R98, D111, T119–E121, Q138, and Y151 contribute to the dCTP site. E121 (proton donor/acceptor) is an active-site residue.

It belongs to the dCTP deaminase family. In terms of assembly, homotrimer.

It carries out the reaction dCTP + 2 H2O = dUMP + NH4(+) + diphosphate. Its pathway is pyrimidine metabolism; dUMP biosynthesis; dUMP from dCTP: step 1/1. Functionally, bifunctional enzyme that catalyzes both the deamination of dCTP to dUTP and the hydrolysis of dUTP to dUMP without releasing the toxic dUTP intermediate. The polypeptide is dCTP deaminase, dUMP-forming (Clostridium botulinum (strain Alaska E43 / Type E3)).